The primary structure comprises 709 residues: DNA ligase (709 aa).

Residues 1–20 (MTATHRGAQADASAPAGPLP) are disordered. NAD(+) contacts are provided by residues 52 to 56 (DAEYD), 101 to 102 (SL), and E146. The active-site N6-AMP-lysine intermediate is the K148. Residues R169, E205, K322, and K346 each coordinate NAD(+). 4 residues coordinate Zn(2+): C440, C443, C458, and C464. Positions 623–709 (KAPAPLSGKT…AEAGAAPAQE (87 aa)) constitute a BRCT domain.

It belongs to the NAD-dependent DNA ligase family. LigA subfamily. Mg(2+) serves as cofactor. It depends on Mn(2+) as a cofactor.

It carries out the reaction NAD(+) + (deoxyribonucleotide)n-3'-hydroxyl + 5'-phospho-(deoxyribonucleotide)m = (deoxyribonucleotide)n+m + AMP + beta-nicotinamide D-nucleotide.. In terms of biological role, DNA ligase that catalyzes the formation of phosphodiester linkages between 5'-phosphoryl and 3'-hydroxyl groups in double-stranded DNA using NAD as a coenzyme and as the energy source for the reaction. It is essential for DNA replication and repair of damaged DNA. The protein is DNA ligase of Cupriavidus necator (strain ATCC 17699 / DSM 428 / KCTC 22496 / NCIMB 10442 / H16 / Stanier 337) (Ralstonia eutropha).